The following is a 391-amino-acid chain: Anhydro-N-acetylmuramic acid kinase (391 aa).

9–16 contacts ATP; the sequence is GTSVDGID.

Belongs to the anhydro-N-acetylmuramic acid kinase family.

The enzyme catalyses 1,6-anhydro-N-acetyl-beta-muramate + ATP + H2O = N-acetyl-D-muramate 6-phosphate + ADP + H(+). It functions in the pathway amino-sugar metabolism; 1,6-anhydro-N-acetylmuramate degradation. Its pathway is cell wall biogenesis; peptidoglycan recycling. Its function is as follows. Catalyzes the specific phosphorylation of 1,6-anhydro-N-acetylmuramic acid (anhMurNAc) with the simultaneous cleavage of the 1,6-anhydro ring, generating MurNAc-6-P. Is required for the utilization of anhMurNAc either imported from the medium or derived from its own cell wall murein, and thus plays a role in cell wall recycling. The sequence is that of Anhydro-N-acetylmuramic acid kinase from Gloeothece citriformis (strain PCC 7424) (Cyanothece sp. (strain PCC 7424)).